The following is a 156-amino-acid chain: Single-stranded DNA-binding protein 1 (156 aa).

The SSB domain occupies 1–107 (MNETMICAVG…IDAVAIGHDL (107 aa)). Low complexity predominate over residues 114 to 124 (FRRTARTEAST). The disordered stretch occupies residues 114-156 (FRRTARTEASTSPPRPEPNWEVPAGGTPGEPVPEQRPDPVPVG).

Homotetramer.

This is Single-stranded DNA-binding protein 1 (ssb1) from Streptomyces coelicolor (strain ATCC BAA-471 / A3(2) / M145).